The chain runs to 82 residues: Translational regulator CsrA (82 aa).

Belongs to the CsrA/RsmA family. Homodimer; the beta-strands of each monomer intercalate to form a hydrophobic core while the alpha-helices form wings that extend away from the core. Each of the alpha-helical wings interacts with an FliW monomer, yielding a FliW-CsrA(2)-FliW complex.

It localises to the cytoplasm. Its function is as follows. A translational regulator that binds mRNA to regulate translation initiation and/or mRNA stability. Usually binds in the 5'-UTR at or near the Shine-Dalgarno sequence preventing ribosome-binding, thus repressing translation. Its main target seems to be the major flagellin gene, while its function is anatagonized by FliW. The sequence is that of Translational regulator CsrA from Geobacillus thermodenitrificans (strain NG80-2).